Consider the following 368-residue polypeptide: Branched-chain-amino-acid aminotransferase (368 aa).

Arg101 is a binding site for pyridoxal 5'-phosphate. Lys204 is subject to N6-(pyridoxal phosphate)lysine. Residues Tyr209, 271-272 (IT), and Thr314 each bind pyridoxal 5'-phosphate.

The protein belongs to the class-IV pyridoxal-phosphate-dependent aminotransferase family. As to quaternary structure, homodimer. Pyridoxal 5'-phosphate serves as cofactor.

The enzyme catalyses L-leucine + 2-oxoglutarate = 4-methyl-2-oxopentanoate + L-glutamate. It catalyses the reaction L-isoleucine + 2-oxoglutarate = (S)-3-methyl-2-oxopentanoate + L-glutamate. It carries out the reaction L-valine + 2-oxoglutarate = 3-methyl-2-oxobutanoate + L-glutamate. Its pathway is amino-acid biosynthesis; L-isoleucine biosynthesis; L-isoleucine from 2-oxobutanoate: step 4/4. It participates in amino-acid biosynthesis; L-leucine biosynthesis; L-leucine from 3-methyl-2-oxobutanoate: step 4/4. It functions in the pathway amino-acid biosynthesis; L-valine biosynthesis; L-valine from pyruvate: step 4/4. Functionally, catalyzes the reversible transfers of an amino group from glutamate to the alpha-ketoacid of the respective amino acid in the final step in the biosynthesis of branchedchain amino acids. The protein is Branched-chain-amino-acid aminotransferase (ilvE) of Mycobacterium tuberculosis (strain CDC 1551 / Oshkosh).